The sequence spans 819 residues: Pentatricopeptide repeat-containing protein At1g52620 (819 aa).

PPR repeat units lie at residues 98-132 (NGFACSSFLKLLARYRIFNEIEDVLGNLRNENVKL), 133-163 (THEALSHVLHAYAESGSLSKAVEIYDYVVEL), 169-203 (DVIACNSLLSLLVKSRRLGDARKVYDEMCDRGDSV), 204-238 (DNYSTCILVKGMCNEGKVEVGRKLIEGRWGKGCIP), 239-273 (NIVFYNTIIGGYCKLGDIENAYLVFKELKLKGFMP), 274-308 (TLETFGTMINGFCKEGDFVASDRLLSEVKERGLRV), 309-343 (SVWFLNNIIDAKYRHGYKVDPAESIGWIIANDCKP), 344-378 (DVATYNILINRLCKEGKKEVAVGFLDEASKKGLIP), 379-413 (NNLSYAPLIQAYCKSKEYDIASKLLLQMAERGCKP), 414-448 (DIVTYGILIHGLVVSGHMDDAVNMKVKLIDRGVSP), 449-483 (DAAIYNMLMSGLCKTGRFLPAKLLFSEMLDRNILP), 484-518 (DAYVYATLIDGFIRSGDFDEARKVFSLSVEKGVKV), 519-553 (DVVHHNAMIKGFCRSGMLDEALACMNRMNEEHLVP), 554-588 (DKFTYSTIIDGYVKQQDMATAIKIFRYMEKNKCKP), 589-623 (NVVTYTSLINGFCCQGDFKMAEETFKEMQLRDLVP), 624-659 (NVVTYTTLIRSLAKESSTLEKAVYYWELMMTNKCVP), 709-743 (HAAAYNSALVCLCVHGMVKTACMFQDKMVKKGFSP), and 744-779 (DPVSFAAILHGFCVVGNSKQWRNMDFCNLGEKGLEV).

This sequence belongs to the PPR family. P subfamily.

The protein is Pentatricopeptide repeat-containing protein At1g52620 of Arabidopsis thaliana (Mouse-ear cress).